Here is a 66-residue protein sequence, read N- to C-terminus: Large ribosomal subunit protein bL33 (66 aa).

It belongs to the bacterial ribosomal protein bL33 family.

This chain is Large ribosomal subunit protein bL33, found in Prochlorococcus marinus (strain MIT 9303).